Reading from the N-terminus, the 2655-residue chain is Probable polyketide synthase 42 (2655 aa).

Positions 16–445 constitute a Ketosynthase family 3 (KS3) domain; sequence QNGVAVIGVG…GSNCCIILSE (430 aa). Active-site for beta-ketoacyl synthase activity residues include Cys186, His325, and His368. Residues 634–667 are acyl/malonyl transferase; the sequence is GIKSDIMVGHSFGEIACSYCSGMVDFKTLCYLTY. The active-site For acyl/malonyl transferase activity is the Ser644. An N-terminal hotdog fold region spans residues 926 to 1059; the sequence is HPTWKKANKN…ANYSLFKHND (134 aa). A PKS/mFAS DH domain is found at 926–1234; the sequence is HPTWKKANKN…CKSSIPIIDS (309 aa). His970 (proton acceptor; for dehydratase activity) is an active-site residue. The segment at 1074–1234 is C-terminal hotdog fold; the sequence is NYTIISKDEL…CKSSIPIIDS (161 aa). Asp1146 acts as the Proton donor; for dehydratase activity in catalysis. The tract at residues 1700-1719 is disordered; that stretch reads YNNNNNNNNNNNNNNNNNNN. The 78-residue stretch at 2517–2594 folds into the Carrier domain; sequence NENNNIGDLL…TTIEIIIKGY (78 aa). The residue at position 2554 (Ser2554) is an O-(pantetheine 4'-phosphoryl)serine. The disordered stretch occupies residues 2612–2655; that stretch reads SVVQKETIKDNNENKDDIKIDMDDKKENLKGKKENIDDKKENNN. Positions 2617-2655 are enriched in basic and acidic residues; the sequence is ETIKDNNENKDDIKIDMDDKKENLKGKKENIDDKKENNN. The stretch at 2618 to 2655 forms a coiled coil; the sequence is TIKDNNENKDDIKIDMDDKKENLKGKKENIDDKKENNN.

The cofactor is pantetheine 4'-phosphate.

In terms of biological role, probable polyketide synthase. This Dictyostelium discoideum (Social amoeba) protein is Probable polyketide synthase 42 (pks42).